The chain runs to 316 residues: Lipoyl synthase (316 aa).

Over residues 1 to 19 (MRDLKIPEQRHPEKAHRPD) the composition is skewed to basic and acidic residues. Residues 1–31 (MRDLKIPEQRHPEKAHRPDNAQPKKPSWIRV) form a disordered region. [4Fe-4S] cluster is bound by residues Cys-55, Cys-60, Cys-66, Cys-81, Cys-85, Cys-88, and Ser-295. One can recognise a Radical SAM core domain in the interval 67-284 (WSQGHATMMI…EKAAYGKGFL (218 aa)).

The protein belongs to the radical SAM superfamily. Lipoyl synthase family. It depends on [4Fe-4S] cluster as a cofactor.

Its subcellular location is the cytoplasm. The enzyme catalyses [[Fe-S] cluster scaffold protein carrying a second [4Fe-4S](2+) cluster] + N(6)-octanoyl-L-lysyl-[protein] + 2 oxidized [2Fe-2S]-[ferredoxin] + 2 S-adenosyl-L-methionine + 4 H(+) = [[Fe-S] cluster scaffold protein] + N(6)-[(R)-dihydrolipoyl]-L-lysyl-[protein] + 4 Fe(3+) + 2 hydrogen sulfide + 2 5'-deoxyadenosine + 2 L-methionine + 2 reduced [2Fe-2S]-[ferredoxin]. It participates in protein modification; protein lipoylation via endogenous pathway; protein N(6)-(lipoyl)lysine from octanoyl-[acyl-carrier-protein]: step 2/2. Catalyzes the radical-mediated insertion of two sulfur atoms into the C-6 and C-8 positions of the octanoyl moiety bound to the lipoyl domains of lipoate-dependent enzymes, thereby converting the octanoylated domains into lipoylated derivatives. This chain is Lipoyl synthase, found in Ruegeria sp. (strain TM1040) (Silicibacter sp.).